Reading from the N-terminus, the 719-residue chain is DNA polymerase epsilon subunit B (719 aa).

Residues 107-147 form a disordered region; the sequence is SIPPKTKTYNNGGGKTTTIDRFLTKRPSPSDNDEGPLDQSI.

It belongs to the DNA polymerase epsilon subunit B family. In terms of assembly, heterotetramer. Consists of four subunits: POL2, DPB2, DPB3 and DPB4.

It localises to the nucleus. Functionally, as accessory component of the DNA polymerase epsilon (DNA polymerase II) participates in chromosomal DNA replication. The polypeptide is DNA polymerase epsilon subunit B (DPB2) (Candida glabrata (strain ATCC 2001 / BCRC 20586 / JCM 3761 / NBRC 0622 / NRRL Y-65 / CBS 138) (Yeast)).